Consider the following 297-residue polypeptide: Coiled-coil domain-containing protein 196 (297 aa).

A coiled-coil region spans residues 83–117 (ESSVMELLKEAEEMKQNLERKNKMLRKEMEMLWNK). A disordered region spans residues 122–161 (EELSDQQKAPQTKNKADLQDGKAPKSPSSPRKTESELEKS). Composition is skewed to basic and acidic residues over residues 135–144 (NKADLQDGKA) and 152–161 (RKTESELEKS).

In Homo sapiens (Human), this protein is Coiled-coil domain-containing protein 196.